The chain runs to 127 residues: Nuclear transport factor 2 (127 aa).

The NTF2 domain maps to 11-124 (VGKQFVEHYY…FLLINDFFRL (114 aa)).

It is found in the cytoplasm. Its subcellular location is the cytosol. It localises to the nucleus outer membrane. The protein localises to the nucleus. The protein resides in the nuclear pore complex. It is found in the nucleus inner membrane. Its subcellular location is the nucleoplasm. Mediates the import of GDP-bound RAN from the cytoplasm into the nucleus which is essential for the function of RAN in cargo receptor-mediated nucleocytoplasmic transport. Thereby, plays indirectly a more general role in cargo receptor-mediated nucleocytoplasmic transport. Interacts with GDP-bound RAN in the cytosol, recruits it to the nuclear pore complex via its interaction with nucleoporins and promotes its nuclear import. This Dictyostelium discoideum (Social amoeba) protein is Nuclear transport factor 2.